A 347-amino-acid chain; its full sequence is Dihydroorotase (347 aa).

Residues His-14 and His-16 each coordinate Zn(2+). Substrate is bound by residues 16-18 and Asn-42; that span reads HLR. Positions 100, 137, and 175 each coordinate Zn(2+). At Lys-100 the chain carries N6-carboxylysine. Position 137 (His-137) interacts with substrate. Leu-220 lines the substrate pocket. A Zn(2+)-binding site is contributed by Asp-248. The active site involves Asp-248. His-252 and Ala-264 together coordinate substrate.

The protein belongs to the metallo-dependent hydrolases superfamily. DHOase family. Class II DHOase subfamily. Homodimer. The cofactor is Zn(2+).

It catalyses the reaction (S)-dihydroorotate + H2O = N-carbamoyl-L-aspartate + H(+). Its pathway is pyrimidine metabolism; UMP biosynthesis via de novo pathway; (S)-dihydroorotate from bicarbonate: step 3/3. Functionally, catalyzes the reversible cyclization of carbamoyl aspartate to dihydroorotate. The chain is Dihydroorotase from Pseudomonas syringae pv. tomato (strain ATCC BAA-871 / DC3000).